Here is a 548-residue protein sequence, read N- to C-terminus: Mercuric reductase (548 aa).

The HMA domain occupies 1–65 (MTEITVNGMT…AIAALGYQGS (65 aa)). Positions 11 and 14 each coordinate a metal cation. FAD contacts are provided by alanine 97, glycine 117, and threonine 122. Cysteine 123 and cysteine 128 form a disulfide bridge. FAD is bound by residues lysine 132, alanine 198, aspartate 390, and valine 398. Hg(2+) contacts are provided by cysteine 545 and cysteine 546.

It belongs to the class-I pyridine nucleotide-disulfide oxidoreductase family. Homodimer. Requires FAD as cofactor.

The catalysed reaction is Hg + NADP(+) + H(+) = Hg(2+) + NADPH. Functionally, resistance to Hg(2+) in bacteria appears to be governed by a specialized system which includes mercuric reductase. MerA protein is responsible for volatilizing mercury as Hg(0). In Pseudomonas fluorescens, this protein is Mercuric reductase (merA).